Here is a 462-residue protein sequence, read N- to C-terminus: MSKAHIIGFGKSGVAAARLLKKNGWEVELSDRNTSDSLQQKEKQLTQEGITVKLNYSFEPETSLDLVIVSPGVPWDLPALQRSRETGIETIGEMELAWRYLKSSSWVGITGTNGKTTTTALTAAIFQTAGLYAPACGNIGYAACELALQDTLPDWVIAEISSYQIESSNTLSPQIAVWTTFTADHLSRHYNLENYFNIKADLLNRSQIQILNGDDYYLHENAAHLYHNSYWTSIQGKANLVADVTRGIYLEDGWVVALQEKIIPVELLQMLGSHNQQNLLMAVAVAKFAGIENEAIAEAVKNFPGVPHRLEYICRWNGVDFINDSKATNYDAAAMGLKALVAPILLIAGGEAKEGNDNDWLRQIKEKVVFVLLIGSAAEFLAKRLQKINFLNYEIVENMERAVIRGAALSKKYDAKTVLLSPACASFDQYQNFEERGEVFRQLSLGLNHKKKNDIRFGSSRI.

111 to 117 (GTNGKTT) serves as a coordination point for ATP.

This sequence belongs to the MurCDEF family.

It localises to the cytoplasm. It catalyses the reaction UDP-N-acetyl-alpha-D-muramoyl-L-alanine + D-glutamate + ATP = UDP-N-acetyl-alpha-D-muramoyl-L-alanyl-D-glutamate + ADP + phosphate + H(+). It functions in the pathway cell wall biogenesis; peptidoglycan biosynthesis. Functionally, cell wall formation. Catalyzes the addition of glutamate to the nucleotide precursor UDP-N-acetylmuramoyl-L-alanine (UMA). The sequence is that of UDP-N-acetylmuramoylalanine--D-glutamate ligase from Trichodesmium erythraeum (strain IMS101).